The following is a 309-amino-acid chain: Sodium/potassium-transporting ATPase subunit beta-1 (309 aa).

Topologically, residues 1–45 (MSKNNGKGAKGEFEFPQPAKKQTFSEMIYNPQEGTFFGRTGKSWS) are cytoplasmic. The helical; Signal-anchor for type II membrane protein transmembrane segment at 46 to 66 (QLLLFYTIFYIVLAALFTICM) threads the bilayer. At 67 to 309 (QGLLSTISDT…GSVTFQILLD (243 aa)) the chain is on the extracellular side. N-linked (GlcNAc...) asparagine glycosylation occurs at Asn133. 2 disulfides stabilise this stretch: Cys143–Cys155 and Cys165–Cys179. The N-linked (GlcNAc...) asparagine glycan is linked to Asn211. Cys225 and Cys282 are oxidised to a cystine.

The protein belongs to the X(+)/potassium ATPases subunit beta family. The sodium/potassium-transporting ATPase is composed of a catalytic alpha subunit, an auxiliary non-catalytic beta subunit and an additional regulatory subunit. Interacts with nkain. In embryos, it is expressed in the neurons of the CNS and PNS, in Garland cells and posterior spiracles. In adults, it is concentrated in the thorax and abdomen (muscle tissue, digestive system and Malpighian tubules) and weakly expressed in the head. Expression is diffuse in the nervous system.

It localises to the cell membrane. In terms of biological role, this is the non-catalytic component of the active enzyme, which catalyzes the hydrolysis of ATP coupled with the exchange of Na(+) and K(+) ions across the plasma membrane. The beta subunit regulates, through assembly of alpha/beta heterodimers, the number of sodium pumps transported to the plasma membrane. The protein is Sodium/potassium-transporting ATPase subunit beta-1 (nrv1) of Drosophila melanogaster (Fruit fly).